Here is a 904-residue protein sequence, read N- to C-terminus: Leucine--tRNA ligase (904 aa).

A 'HIGH' region motif is present at residues 49 to 59 (PYPSGDLHIGH). Positions 663–667 (TMSKS) match the 'KMSKS' region motif. Residue lysine 666 coordinates ATP.

It belongs to the class-I aminoacyl-tRNA synthetase family.

It localises to the cytoplasm. The catalysed reaction is tRNA(Leu) + L-leucine + ATP = L-leucyl-tRNA(Leu) + AMP + diphosphate. In Roseiflexus castenholzii (strain DSM 13941 / HLO8), this protein is Leucine--tRNA ligase.